The chain runs to 112 residues: uncharacterized protein (112 aa).

This sequence to M.jannaschii MJ1244 and M.thermoautotrophicum MTH1110.

This is an uncharacterized protein from Methanocaldococcus jannaschii (strain ATCC 43067 / DSM 2661 / JAL-1 / JCM 10045 / NBRC 100440) (Methanococcus jannaschii).